Reading from the N-terminus, the 482-residue chain is Falcipain-2b (482 aa).

The Cytoplasmic portion of the chain corresponds to 1-35; the sequence is MDYHMDYIPNEVISHQGERFVDKYVDRKILKNKKS. Residues 1-241 constitute a propeptide, activation peptide; sequence MDYHMDYIPN…PLKNSKYLLD (241 aa). The short motif at 16 to 25 is the Bipartite vacuolar targeting signal 1 element; sequence QGERFVDKYV. Residues 36–56 traverse the membrane as a helical; Signal-anchor for type II membrane protein segment; sequence LLVIISLSVLSVVGFILFYFT. Over 57–482 the chain is Lumenal; sequence PNFRKSDLFK…GTDAFIPLIE (426 aa). N67 is a glycosylation site (N-linked (GlcNAc...) asparagine). Residues 84 to 105 carry the Bipartite vacuolar targeting signal 2 motif; sequence KSPNGKKFIVSKIDEALSFYDN. A glycan (N-linked (GlcNAc...) asparagine) is linked at N117. Residues 242–258 carry the Nose motif; required for the correct folding of the mature form motif; sequence QINYDAVIKKYKGNENF. 4 cysteine pairs are disulfide-bonded: C280–C321, C314–C355, C340–C360, and C409–C470. The active site involves C283. Residue H415 is part of the active site. Residues 426–435 carry the Arm motif; binds to host hemoglobin and required for the inhibitory interaction between the propeptide and the catalytic domain motif; that stretch reads EIVNPLTKKG.

The protein belongs to the peptidase C1 family. In terms of assembly, component of the hemozoin formation complex (HFC) composed of falcipains FP2A and/or FP2B, plasmepsins PMII, PMIII/HAP and PMIV, heme detoxifying protein HDP and falcilysin FLN. The HFC complex is involved in hemoglobin degradation and detoxification of heme in the food vacuole during the asexual blood stage.

It localises to the vacuole. Its subcellular location is the membrane. Its function is as follows. Cysteine protease which cleaves native host hemoglobin in the food vacuole during the asexual blood stage. Preferentially cleaves substrates which have a leucine at the P2 position. The polypeptide is Falcipain-2b (Plasmodium falciparum (isolate 3D7)).